Here is a 168-residue protein sequence, read N- to C-terminus: Disulfide bond formation protein B (168 aa).

Residues 1-11 (MSNPMRPVRSI) lie on the Cytoplasmic side of the membrane. The helical transmembrane segment at 12 to 28 (LLAIFTGCAGLIGYALY) threads the bilayer. At 29 to 46 (LQLVENLLPCPLCVVQRM) the chain is on the periplasmic side. Cys38 and Cys41 are oxidised to a cystine. Residues 47 to 63 (AYWLIGLTALAGFFHTP) traverse the membrane as a helical segment. Over 64-69 (ETTGRR) the chain is Cytoplasmic. The chain crosses the membrane as a helical span at residues 70 to 87 (IYAGLMAVFAFTGGLVAL). The Periplasmic portion of the chain corresponds to 88 to 143 (RQAWLVRYPEAFECGISPEEAFLNALPLARWWPVMFEANGDCADVTWKFASLTLPD). Cysteines 101 and 129 form a disulfide. A helical membrane pass occupies residues 144–162 (WSAIFFMILAALSIYVLLV). At 163–168 (RENQRE) the chain is on the cytoplasmic side.

It belongs to the DsbB family.

The protein resides in the cell inner membrane. Functionally, required for disulfide bond formation in some periplasmic proteins. Acts by oxidizing the DsbA protein. The chain is Disulfide bond formation protein B from Nitrosospira multiformis (strain ATCC 25196 / NCIMB 11849 / C 71).